Consider the following 226-residue polypeptide: MAKAGKKYQDACKLVEAGKFYTAAEAMELVKKTATKKFDETIELHVRLGVDPKYADQQVRGAMVLPHGTGKSKRVLVFAKGEKVKEAEAAGADFVGSDEIVQKIQGGWLDFDVAVATPDMMGTVGRLGKVLGPRGLMPNPKLGTVTMDLTKAVSEIKAGKVEYRTDKAGNVHCPIGKASFDAEKLQQNFQALIDTLNRVKPAAAKGQYMRSITVSATMGPGIPVQL.

This sequence belongs to the universal ribosomal protein uL1 family. In terms of assembly, part of the 50S ribosomal subunit.

Its function is as follows. Binds directly to 23S rRNA. The L1 stalk is quite mobile in the ribosome, and is involved in E site tRNA release. Protein L1 is also a translational repressor protein, it controls the translation of the L11 operon by binding to its mRNA. This is Large ribosomal subunit protein uL1 from Selenomonas ruminantium.